We begin with the raw amino-acid sequence, 408 residues long: LL-diaminopimelate aminotransferase (408 aa).

Residues tyrosine 15 and glycine 42 each contribute to the substrate site. Pyridoxal 5'-phosphate is bound by residues tyrosine 72, 108–109 (SK), tyrosine 132, asparagine 187, tyrosine 218, and 246–248 (SFS). Substrate-binding residues include lysine 109, tyrosine 132, and asparagine 187. Residue lysine 249 is modified to N6-(pyridoxal phosphate)lysine. Pyridoxal 5'-phosphate is bound by residues arginine 257 and asparagine 292. Asparagine 292 and arginine 388 together coordinate substrate.

It belongs to the class-I pyridoxal-phosphate-dependent aminotransferase family. LL-diaminopimelate aminotransferase subfamily. In terms of assembly, homodimer. It depends on pyridoxal 5'-phosphate as a cofactor.

It carries out the reaction (2S,6S)-2,6-diaminopimelate + 2-oxoglutarate = (S)-2,3,4,5-tetrahydrodipicolinate + L-glutamate + H2O + H(+). The protein operates within amino-acid biosynthesis; L-lysine biosynthesis via DAP pathway; LL-2,6-diaminopimelate from (S)-tetrahydrodipicolinate (aminotransferase route): step 1/1. Involved in the synthesis of meso-diaminopimelate (m-DAP or DL-DAP), required for both lysine and peptidoglycan biosynthesis. Catalyzes the direct conversion of tetrahydrodipicolinate to LL-diaminopimelate. The polypeptide is LL-diaminopimelate aminotransferase (Leptospira biflexa serovar Patoc (strain Patoc 1 / Ames)).